Here is a 279-residue protein sequence, read N- to C-terminus: Acetyl-coenzyme A carboxylase carboxyl transferase subunit beta (279 aa).

A CoA carboxyltransferase N-terminal domain is found at 23-279 (LWWKCEECGA…LVTLFSMLKV (257 aa)). Zn(2+) contacts are provided by cysteine 27, cysteine 30, cysteine 46, and cysteine 49. The segment at 27-49 (CEECGAMLHKKQFEDHFFTCAEC) adopts a C4-type zinc-finger fold.

Belongs to the AccD/PCCB family. In terms of assembly, acetyl-CoA carboxylase is a heterohexamer composed of biotin carboxyl carrier protein (AccB), biotin carboxylase (AccC) and two subunits each of ACCase subunit alpha (AccA) and ACCase subunit beta (AccD). Zn(2+) serves as cofactor.

It localises to the cytoplasm. The catalysed reaction is N(6)-carboxybiotinyl-L-lysyl-[protein] + acetyl-CoA = N(6)-biotinyl-L-lysyl-[protein] + malonyl-CoA. The protein operates within lipid metabolism; malonyl-CoA biosynthesis; malonyl-CoA from acetyl-CoA: step 1/1. Functionally, component of the acetyl coenzyme A carboxylase (ACC) complex. Biotin carboxylase (BC) catalyzes the carboxylation of biotin on its carrier protein (BCCP) and then the CO(2) group is transferred by the transcarboxylase to acetyl-CoA to form malonyl-CoA. This chain is Acetyl-coenzyme A carboxylase carboxyl transferase subunit beta, found in Pelodictyon phaeoclathratiforme (strain DSM 5477 / BU-1).